The following is a 177-amino-acid chain: MEEREESISFVDQRFLGSKPLDDTNVLEYFSGSPFYDKSCNNEILKMQTQFRGLDQKSKLFSMVGIFYEVESSNHEKTLFVIRKAYNHGDTAETLGMYYIIHGHVYAAPTNYSIYRCRMGDSMWQLNSFIDRMMEKRRFNPFSPPKGRRLAKSLEDSKDLDFMMEIFNDFKKEQAES.

The protein belongs to the Mediator complex subunit 6 family. Component of the Mediator complex.

Its subcellular location is the nucleus. In terms of biological role, component of the Mediator complex, a coactivator involved in the regulated transcription of nearly all RNA polymerase II-dependent genes. Mediator functions as a bridge to convey information from gene-specific regulatory proteins to the basal RNA polymerase II transcription machinery. Mediator is recruited to promoters by direct interactions with regulatory proteins and serves as a scaffold for the assembly of a functional preinitiation complex with RNA polymerase II and the general transcription factors. The sequence is that of Mediator of RNA polymerase II transcription subunit 6 (MED6) from Encephalitozoon cuniculi (strain GB-M1) (Microsporidian parasite).